We begin with the raw amino-acid sequence, 167 residues long: NADH-ubiquinone oxidoreductase chain 6 (167 aa).

5 helical membrane passes run 1 to 21, 27 to 47, 50 to 70, 88 to 108, and 143 to 163; these read MKMM…VAFA, VYGG…VVSL, VFLG…VFGY, VALS…LMSG, and WALV…LEVV.

Belongs to the complex I subunit 6 family. In terms of assembly, core subunit of respiratory chain NADH dehydrogenase (Complex I) which is composed of 45 different subunits.

The protein resides in the mitochondrion inner membrane. It carries out the reaction a ubiquinone + NADH + 5 H(+)(in) = a ubiquinol + NAD(+) + 4 H(+)(out). Its function is as follows. Core subunit of the mitochondrial membrane respiratory chain NADH dehydrogenase (Complex I) which catalyzes electron transfer from NADH through the respiratory chain, using ubiquinone as an electron acceptor. Essential for the catalytic activity and assembly of complex I. The sequence is that of NADH-ubiquinone oxidoreductase chain 6 (MT-ND6) from Osphranter robustus (Wallaroo).